The primary structure comprises 193 residues: Peptidyl-tRNA hydrolase (193 aa).

Tyr17 contributes to the tRNA binding site. Catalysis depends on His22, which acts as the Proton acceptor. TRNA contacts are provided by Tyr69, Asn71, and Asn117.

The protein belongs to the PTH family. Monomer.

It localises to the cytoplasm. It catalyses the reaction an N-acyl-L-alpha-aminoacyl-tRNA + H2O = an N-acyl-L-amino acid + a tRNA + H(+). In terms of biological role, hydrolyzes ribosome-free peptidyl-tRNAs (with 1 or more amino acids incorporated), which drop off the ribosome during protein synthesis, or as a result of ribosome stalling. Functionally, catalyzes the release of premature peptidyl moieties from peptidyl-tRNA molecules trapped in stalled 50S ribosomal subunits, and thus maintains levels of free tRNAs and 50S ribosomes. The sequence is that of Peptidyl-tRNA hydrolase from Leifsonia xyli subsp. xyli (strain CTCB07).